The primary structure comprises 441 residues: Serine--tRNA ligase (441 aa).

250-252 (TSE) contributes to the L-serine binding site. ATP is bound by residues 281–283 (RRE) and V297. E304 provides a ligand contact to L-serine. 368-371 (EIVS) lines the ATP pocket. Residue T402 participates in L-serine binding.

Belongs to the class-II aminoacyl-tRNA synthetase family. Type-1 seryl-tRNA synthetase subfamily. Homodimer. The tRNA molecule binds across the dimer.

It is found in the cytoplasm. The catalysed reaction is tRNA(Ser) + L-serine + ATP = L-seryl-tRNA(Ser) + AMP + diphosphate + H(+). It catalyses the reaction tRNA(Sec) + L-serine + ATP = L-seryl-tRNA(Sec) + AMP + diphosphate + H(+). It functions in the pathway aminoacyl-tRNA biosynthesis; selenocysteinyl-tRNA(Sec) biosynthesis; L-seryl-tRNA(Sec) from L-serine and tRNA(Sec): step 1/1. Its function is as follows. Catalyzes the attachment of serine to tRNA(Ser). Is also able to aminoacylate tRNA(Sec) with serine, to form the misacylated tRNA L-seryl-tRNA(Sec), which will be further converted into selenocysteinyl-tRNA(Sec). The sequence is that of Serine--tRNA ligase from Thermoplasma acidophilum (strain ATCC 25905 / DSM 1728 / JCM 9062 / NBRC 15155 / AMRC-C165).